Here is an 89-residue protein sequence, read N- to C-terminus: Small ribosomal subunit protein uS14A (89 aa).

It belongs to the universal ribosomal protein uS14 family. Part of the 30S ribosomal subunit. Contacts proteins S3 and S10.

Functionally, binds 16S rRNA, required for the assembly of 30S particles and may also be responsible for determining the conformation of the 16S rRNA at the A site. This Ligilactobacillus salivarius (strain UCC118) (Lactobacillus salivarius) protein is Small ribosomal subunit protein uS14A.